Here is a 321-residue protein sequence, read N- to C-terminus: uncharacterized protein (321 aa).

Catalysis depends on Y49, which acts as the Proton donor. Substrate is bound at residue H106.

The protein belongs to the aldo/keto reductase family.

This is an uncharacterized protein from Caenorhabditis elegans.